Here is a 124-residue protein sequence, read N- to C-terminus: Small ribosomal subunit protein uS12 (124 aa).

A 3-methylthioaspartic acid modification is found at Asp-89. The tract at residues 102-124 is disordered; it reads LDTSGVNNRKHGRSKYGTKRPKS. A compositionally biased stretch (basic residues) spans 109-124; it reads NRKHGRSKYGTKRPKS.

The protein belongs to the universal ribosomal protein uS12 family. As to quaternary structure, part of the 30S ribosomal subunit. Contacts proteins S8 and S17. May interact with IF1 in the 30S initiation complex.

In terms of biological role, with S4 and S5 plays an important role in translational accuracy. Its function is as follows. Interacts with and stabilizes bases of the 16S rRNA that are involved in tRNA selection in the A site and with the mRNA backbone. Located at the interface of the 30S and 50S subunits, it traverses the body of the 30S subunit contacting proteins on the other side and probably holding the rRNA structure together. The combined cluster of proteins S8, S12 and S17 appears to hold together the shoulder and platform of the 30S subunit. In Francisella tularensis subsp. novicida (strain U112), this protein is Small ribosomal subunit protein uS12.